Reading from the N-terminus, the 311-residue chain is Delta(1)-pyrroline-2-carboxylate/Delta(1)-piperideine-2-carboxylate reductase (311 aa).

This sequence belongs to the ornithine cyclodeaminase/mu-crystallin family. As to quaternary structure, homodimer.

It carries out the reaction L-pipecolate + NAD(+) = Delta(1)-piperideine-2-carboxylate + NADH + H(+). The enzyme catalyses L-pipecolate + NADP(+) = Delta(1)-piperideine-2-carboxylate + NADPH + H(+). It catalyses the reaction L-proline + NAD(+) = 1-pyrroline-2-carboxylate + NADH + H(+). The catalysed reaction is L-proline + NADP(+) = 1-pyrroline-2-carboxylate + NADPH + H(+). Its pathway is amino-acid degradation. In terms of biological role, catalyzes the reduction of both Delta(1)-pyrroline-2-carboxylate (Pyr2C) and Delta(1)-piperideine-2-carboxylate (Pip2C) to L-proline and L-pipecolate, respectively, using NADPH or NADH as the electron donor. Can also catalyze the reverse oxidation reactions, albeit at a much lower rate. Together with LhpH, is involved in a trans-3-hydroxy-L-proline (t3LHyp) degradation pathway to L-proline, which allows A.brasilense to grow on t3LHyp as a sole carbon source. Also appears to be involved in D-proline and D-lysine metabolism. Does not show ornithine cyclodeaminase (OCD) activity. This chain is Delta(1)-pyrroline-2-carboxylate/Delta(1)-piperideine-2-carboxylate reductase, found in Azospirillum brasilense.